The primary structure comprises 146 residues: Small ribosomal subunit protein bS6 (146 aa).

A disordered region spans residues 94 to 146 (GPITTPSPMMQEGKSRPPHSSDEDSENTAPAKAKTADSPGEDTRTTEESDPKP). Basic and acidic residues-rich tracts occupy residues 106–115 (GKSRPPHSSD) and 134–146 (EDTR…DPKP).

It belongs to the bacterial ribosomal protein bS6 family.

Its function is as follows. Binds together with bS18 to 16S ribosomal RNA. In Nitrosomonas europaea (strain ATCC 19718 / CIP 103999 / KCTC 2705 / NBRC 14298), this protein is Small ribosomal subunit protein bS6.